Here is a 504-residue protein sequence, read N- to C-terminus: ATP synthase subunit beta (504 aa).

181–188 (GGAGVGKT) is a binding site for ATP.

Belongs to the ATPase alpha/beta chains family. In terms of assembly, F-type ATPases have 2 components, CF(1) - the catalytic core - and CF(0) - the membrane proton channel. CF(1) has five subunits: alpha(3), beta(3), gamma(1), delta(1), epsilon(1). CF(0) has three main subunits: a(1), b(2) and c(9-12). The alpha and beta chains form an alternating ring which encloses part of the gamma chain. CF(1) is attached to CF(0) by a central stalk formed by the gamma and epsilon chains, while a peripheral stalk is formed by the delta and b chains.

It is found in the cell inner membrane. The enzyme catalyses ATP + H2O + 4 H(+)(in) = ADP + phosphate + 5 H(+)(out). Functionally, produces ATP from ADP in the presence of a proton gradient across the membrane. The catalytic sites are hosted primarily by the beta subunits. The chain is ATP synthase subunit beta from Ehrlichia ruminantium (strain Welgevonden).